Reading from the N-terminus, the 152-residue chain is Small ribosomal subunit protein uS13 (152 aa).

It belongs to the universal ribosomal protein uS13 family. As to quaternary structure, part of the 30S ribosomal subunit. Forms a loose heterodimer with protein S19. Forms two bridges to the 50S subunit in the 70S ribosome.

In terms of biological role, located at the top of the head of the 30S subunit, it contacts several helices of the 16S rRNA. In the 70S ribosome it contacts the 23S rRNA (bridge B1a) and protein L5 of the 50S subunit (bridge B1b), connecting the 2 subunits; these bridges are implicated in subunit movement. This Pyrobaculum aerophilum (strain ATCC 51768 / DSM 7523 / JCM 9630 / CIP 104966 / NBRC 100827 / IM2) protein is Small ribosomal subunit protein uS13.